The following is a 783-amino-acid chain: Probable potassium transporter 2 (783 aa).

Residues 1 to 21 are Cytoplasmic-facing; sequence MDAEAGVGGADQLPWRQHYRN. The chain crosses the membrane as a helical span at residues 22–42; it reads LLLLAYQSFGVVYGDLSTSPL. The Extracellular portion of the chain corresponds to 43–61; that stretch reads YVYKSTFSGRLRRYQDEQT. Residues 62-82 form a helical membrane-spanning segment; that stretch reads VFGVLSLIFWTFTLIPLLKYV. Over 83-152 the chain is Cytoplasmic; the sequence is TIVLSADDNG…FMEKHKNART (70 aa). A helical membrane pass occupies residues 153–173; it reads VLLLIVLCGASMMIGDGILTP. Residues 174–189 lie on the Extracellular side of the membrane; that stretch reads AISVLSSMSGLKVRAT. A helical membrane pass occupies residues 190 to 210; the sequence is GLHDRSVVLLSCIVLVGLFAL. The Cytoplasmic portion of the chain corresponds to 211-217; the sequence is QHRGTQK. Residues 218–238 form a helical membrane-spanning segment; it reads VAFMFAPIVVIWLFCIGGIGL. Over 239–268 the chain is Extracellular; sequence YNIIHWNPRIYQALSPYYIVKFFRTTGKDG. A helical transmembrane segment spans residues 269–289; it reads WIALGGILLSMTGCEAMFADL. Topologically, residues 290–298 are cytoplasmic; it reads GHFTSASVR. Residues 299–319 traverse the membrane as a helical segment; it reads LAFITIIYPCLILQYMGQAAF. Residues 320 to 338 lie on the Extracellular side of the membrane; sequence LSKNILDMPTGFYDSIPGP. The chain crosses the membrane as a helical span at residues 339–359; sequence IFWPVFVVATLAAVVGSQAVI. Residues 360–390 are Cytoplasmic-facing; sequence SATFSIVKQCHSLGCFPRVKVVHTSRWIYGQ. Residues 391 to 411 form a helical membrane-spanning segment; the sequence is IYIPEINWILMVLCVAVTVAF. At 412 to 422 the chain is on the extracellular side; the sequence is RDITLIGNAYG. A helical membrane pass occupies residues 423–443; sequence VACMTVMFVTTFLMALIMIFV. The Cytoplasmic segment spans residues 444–447; it reads WQKN. A helical membrane pass occupies residues 448–468; that stretch reads IIFALSFFLLFGSVEVVYLSS. The Extracellular portion of the chain corresponds to 469–475; the sequence is SLMKVTQ. The helical transmembrane segment at 476–496 threads the bilayer; the sequence is GGWVPLVLALIFMSVMYIWHY. The Cytoplasmic portion of the chain corresponds to 497–783; the sequence is GTRKKYQYDL…LIEVGMAYQV (287 aa). The segment at 662 to 691 is disordered; it reads DLADSMTMRSTKSESLRSLQSSYEQESPNV. The span at 677 to 691 shows a compositional bias: polar residues; it reads LRSLQSSYEQESPNV.

This sequence belongs to the HAK/KUP transporter (TC 2.A.72.3) family.

It is found in the cell membrane. The enzyme catalyses K(+)(in) = K(+)(out). The catalysed reaction is Na(+)(in) = Na(+)(out). Functionally, high-affinity potassium transporter. Can transport sodium under high sodium and low potassium concentrations in the extracellular environment. The protein is Probable potassium transporter 2 (HAK2) of Oryza sativa subsp. japonica (Rice).